The chain runs to 400 residues: Probable vacuolar protease A (400 aa).

Residues 1 to 18 (MKGSLLLAGATLLGCTSA) form the signal peptide. A propeptide spans 19–72 (KLHSLKLKKVSLKEQLEHADIDVQIKSLGQKYMGIRPEQHEQQMFKEQTPIEVE) (activation peptide). Residues 87 to 397 (YFSEISIGTP…DLGKGTVGLA (311 aa)) enclose the Peptidase A1 domain. Residue D105 is part of the active site. An intrachain disulfide couples C118 to C123. An N-linked (GlcNAc...) asparagine glycan is attached at N140. The active site involves D289. A disulfide bridge connects residues C323 and C356. N340 is a glycosylation site (N-linked (GlcNAc...) asparagine).

This sequence belongs to the peptidase A1 family.

The protein localises to the vacuole lumen. It localises to the secreted. It catalyses the reaction Hydrolysis of proteins with broad specificity for peptide bonds. Cleaves -Leu-Leu-|-Val-Tyr- bond in a synthetic substrate. Does not act on esters of Tyr or Arg.. Functionally, vacuolar aspartic endopeptidase which is probably also secreted and contributes to virulence. The protein is Probable vacuolar protease A (PEP2) of Arthroderma benhamiae (strain ATCC MYA-4681 / CBS 112371) (Trichophyton mentagrophytes).